Reading from the N-terminus, the 576-residue chain is Proline--tRNA ligase (576 aa).

The protein belongs to the class-II aminoacyl-tRNA synthetase family. ProS type 1 subfamily. As to quaternary structure, homodimer.

The protein localises to the cytoplasm. The catalysed reaction is tRNA(Pro) + L-proline + ATP = L-prolyl-tRNA(Pro) + AMP + diphosphate. Its function is as follows. Catalyzes the attachment of proline to tRNA(Pro) in a two-step reaction: proline is first activated by ATP to form Pro-AMP and then transferred to the acceptor end of tRNA(Pro). As ProRS can inadvertently accommodate and process non-cognate amino acids such as alanine and cysteine, to avoid such errors it has two additional distinct editing activities against alanine. One activity is designated as 'pretransfer' editing and involves the tRNA(Pro)-independent hydrolysis of activated Ala-AMP. The other activity is designated 'posttransfer' editing and involves deacylation of mischarged Ala-tRNA(Pro). The misacylated Cys-tRNA(Pro) is not edited by ProRS. In Bordetella parapertussis (strain 12822 / ATCC BAA-587 / NCTC 13253), this protein is Proline--tRNA ligase.